The primary structure comprises 396 residues: 8-amino-7-oxononanoate synthase (396 aa).

Arginine 29 contacts substrate. Pyridoxal 5'-phosphate is bound at residue 116-117; it reads GY. Histidine 141 contributes to the substrate binding site. Residues serine 187, histidine 215, and threonine 243 each coordinate pyridoxal 5'-phosphate. The residue at position 246 (lysine 246) is an N6-(pyridoxal phosphate)lysine. Substrate is bound at residue threonine 360.

Belongs to the class-II pyridoxal-phosphate-dependent aminotransferase family. BioF subfamily. As to quaternary structure, homodimer. Pyridoxal 5'-phosphate is required as a cofactor.

It catalyses the reaction 6-carboxyhexanoyl-[ACP] + L-alanine + H(+) = (8S)-8-amino-7-oxononanoate + holo-[ACP] + CO2. Its pathway is cofactor biosynthesis; biotin biosynthesis. Functionally, catalyzes the decarboxylative condensation of pimeloyl-[acyl-carrier protein] and L-alanine to produce 8-amino-7-oxononanoate (AON), [acyl-carrier protein], and carbon dioxide. In Nitrosospira multiformis (strain ATCC 25196 / NCIMB 11849 / C 71), this protein is 8-amino-7-oxononanoate synthase.